Consider the following 161-residue polypeptide: Insulin-like growth factor 1, juvenile form (161 aa).

The b stretch occupies residues 45-73; sequence GPETLCGAELVDTLQFVCGDRGFYFSKPT. Cystine bridges form between C50/C92, C62/C105, and C91/C96. The tract at residues 74–85 is c; it reads GYGPSSRRSHNR. The tract at residues 86–106 is a; sequence GIVDECCFQSCELRRLEMYCA. The tract at residues 107–114 is d; that stretch reads PVKPGKTP. The segment at 111 to 161 is disordered; it reads GKTPRSVRAQRHTDSPRTAKKPLPGQSHSSYKEVHQKNSSRGNTGGRNYRI. A propeptide spans 115-161 (e peptide); the sequence is RSVRAQRHTDSPRTAKKPLPGQSHSSYKEVHQKNSSRGNTGGRNYRI.

Belongs to the insulin family.

The protein localises to the secreted. In terms of biological role, the insulin-like growth factors, isolated from plasma, are structurally and functionally related to insulin but have a much higher growth-promoting activity. Acts as a ligand for IGF1R. Binds to the alpha subunit of IGF1R, leading to the activation of the intrinsic tyrosine kinase activity which autophosphorylates tyrosine residues in the beta subunit thus initiatiating a cascade of down-stream signaling events leading to activation of the PI3K-AKT/PKB and the Ras-MAPK pathways. Binds to integrins. Its binding to integrins and subsequent ternary complex formation with integrins and IGFR1 are essential for IGF1 signaling. The protein is Insulin-like growth factor 1, juvenile form of Cyprinus carpio (Common carp).